A 364-amino-acid polypeptide reads, in one-letter code: Polygalacturonase (364 aa).

Positions 1 to 21 (MVAYALTSMLLSAGALVAAAP) are cleaved as a signal peptide. Positions 22–27 (SGLDAR) are excised as a propeptide. Residues C30 and C45 are joined by a disulfide bond. 6 PbH1 repeats span residues 158-188 (VTGLTLDRITIDNSAGDSAGAHNTDAFDIGS), 189-210 (SSGITISNANIKNQDDCVAINS), 211-231 (GSDIHVTNCQCSGGHGVSIGS), 240-261 (VKGVVVSGTTIANSDNGVRIKT), 269-291 (VSDITYENITLKNIAKYGIVIEQ), and 303-348 (TTGV…SITG). The active-site Proton donor is D203. C205 and C221 are joined by a disulfide. The active site involves H225. N276 is a glycosylation site (N-linked (GlcNAc...) asparagine). A disulfide bond links C331 and C336. Residue N340 is glycosylated (N-linked (GlcNAc...) asparagine). Cysteines 355 and 364 form a disulfide.

It belongs to the glycosyl hydrolase 28 family.

Its subcellular location is the secreted. The enzyme catalyses (1,4-alpha-D-galacturonosyl)n+m + H2O = (1,4-alpha-D-galacturonosyl)n + (1,4-alpha-D-galacturonosyl)m.. Involved in maceration and soft-rotting of plant tissue. Hydrolyzes the 1,4-alpha glycosidic bonds of de-esterified pectate in the smooth region of the plant cell wall. This is Polygalacturonase (PGN1) from Cochliobolus carbonum (Maize leaf spot fungus).